We begin with the raw amino-acid sequence, 280 residues long: Dolichyl-diphosphooligosaccharide--protein glycosyltransferase subunit 2 (280 aa).

The first 16 residues, 1–16 (MKLLLVLLTIASVALA), serve as a signal peptide directing secretion. The Lumenal portion of the chain corresponds to 17–187 (AVDDVAVNNF…FRQPEKRPSA (171 aa)). Residues 188–208 (LISDLFTIICLSPLLILVVLW) form a helical membrane-spanning segment. Residues 209–222 (SQVGINFQNAPASP) are Cytoplasmic-facing. The chain crosses the membrane as a helical span at residues 223–243 (WVPIFHVGLIGIFGIYFMFWV). Position 244 (Gln244) is a topological domain, lumenal. A helical membrane pass occupies residues 245 to 265 (FDMFVTLKYLAVLGFLTFVAG). At 266–280 (NRVLRAISESKQKSE) the chain is on the cytoplasmic side.

The protein belongs to the SWP1 family. Component of the oligosaccharyltransferase (OST) complex.

The protein resides in the endoplasmic reticulum membrane. The protein operates within protein modification; protein glycosylation. In terms of biological role, subunit of the oligosaccharyl transferase (OST) complex that catalyzes the initial transfer of a defined glycan (Glc(3)Man(9)GlcNAc(2) in eukaryotes) from the lipid carrier dolichol-pyrophosphate to an asparagine residue within an Asn-X-Ser/Thr consensus motif in nascent polypeptide chains, the first step in protein N-glycosylation. N-glycosylation occurs cotranslationally and the complex associates with the Sec61 complex at the channel-forming translocon complex that mediates protein translocation across the endoplasmic reticulum (ER). All subunits are required for a maximal enzyme activity. The sequence is that of Dolichyl-diphosphooligosaccharide--protein glycosyltransferase subunit 2 from Caenorhabditis elegans.